A 138-amino-acid chain; its full sequence is Protein FAM136A (138 aa).

The protein belongs to the FAM136 family.

This chain is Protein FAM136A (fam136a), found in Xenopus laevis (African clawed frog).